Here is a 485-residue protein sequence, read N- to C-terminus: Rhamnulokinase (485 aa).

10 to 14 contacts ATP; the sequence is ASSGR. Residues Ala78 and 233 to 235 each bind substrate; that span reads HDT. Asp234 (proton acceptor) is an active-site residue. Thr256 lines the ATP pocket. Substrate is bound at residue Asn293. Gln301 lines the ATP pocket. Cys351 and Cys368 form a disulfide bridge. Residue Gly400 participates in ATP binding.

It belongs to the rhamnulokinase family. It depends on Mg(2+) as a cofactor.

The catalysed reaction is L-rhamnulose + ATP = L-rhamnulose 1-phosphate + ADP + H(+). The protein operates within carbohydrate degradation; L-rhamnose degradation; glycerone phosphate from L-rhamnose: step 2/3. Its function is as follows. Involved in the catabolism of L-rhamnose (6-deoxy-L-mannose). Catalyzes the transfer of the gamma-phosphate group from ATP to the 1-hydroxyl group of L-rhamnulose to yield L-rhamnulose 1-phosphate. This chain is Rhamnulokinase, found in Bacillus subtilis (strain 168).